Consider the following 316-residue polypeptide: tRNA dimethylallyltransferase (316 aa).

An ATP-binding site is contributed by 17–24; sequence GPTASGKT. Substrate is bound at residue 19–24; it reads TASGKT. 4 interaction with substrate tRNA regions span residues 42–45, 166–170, 247–252, and 280–287; these read DSAL, QRLSR, RCVGYR, and KRQITWLR.

This sequence belongs to the IPP transferase family. As to quaternary structure, monomer. Mg(2+) serves as cofactor.

The catalysed reaction is adenosine(37) in tRNA + dimethylallyl diphosphate = N(6)-dimethylallyladenosine(37) in tRNA + diphosphate. Its function is as follows. Catalyzes the transfer of a dimethylallyl group onto the adenine at position 37 in tRNAs that read codons beginning with uridine, leading to the formation of N6-(dimethylallyl)adenosine (i(6)A). The protein is tRNA dimethylallyltransferase of Escherichia coli O127:H6 (strain E2348/69 / EPEC).